The following is a 176-amino-acid chain: N-alpha-acetyltransferase 30 (176 aa).

Residues 3 to 159 (IVYKPLDIRN…DAFKLILPLT (157 aa)) enclose the N-acetyltransferase domain.

This sequence belongs to the acetyltransferase family. MAK3 subfamily. Component of the N-terminal acetyltransferase C (NatC) complex, which is composed of MAK3, MAK10 and MAK31.

Its subcellular location is the cytoplasm. It is found in the nucleus. It carries out the reaction N-terminal L-methionyl-L-leucyl-[protein] + acetyl-CoA = N-terminal N(alpha)-acetyl-L-methionyl-L-leucyl-[protein] + CoA + H(+). It catalyses the reaction N-terminal L-methionyl-L-isoleucyl-[protein] + acetyl-CoA = N-terminal N(alpha)-acetyl-L-methionyl-L-isoleucyl-[protein] + CoA + H(+). The enzyme catalyses N-terminal L-methionyl-L-phenylalanyl-[protein] + acetyl-CoA = N-terminal N(alpha)-acetyl-L-methionyl-L-phenylalanyl-[protein] + CoA + H(+). The catalysed reaction is N-terminal L-methionyl-L-tryptophyl-[protein] + acetyl-CoA = N-terminal N(alpha)-acetyl-L-methionyl-L-tryptophyl-[protein] + CoA + H(+). It carries out the reaction N-terminal L-methionyl-L-tyrosyl-[protein] + acetyl-CoA = N-terminal N(alpha)-acetyl-L-methionyl-L-tyrosyl-[protein] + CoA + H(+). Functionally, catalytic component of the NatC N-terminal acetyltransferase, which catalyzes acetylation of the N-terminus Met of L-A virus GAG protein and possibly GRH1. This chain is N-alpha-acetyltransferase 30 (MAK3), found in Saccharomyces cerevisiae (strain ATCC 204508 / S288c) (Baker's yeast).